Reading from the N-terminus, the 109-residue chain is U4-lycotoxin-Ls1a (109 aa).

Residues 1 to 22 (MKVLVLFSVLFLTLFSYSSTEA) form the signal peptide. The propeptide occupies 23 to 44 (IDEFDSDAEEDMLSLMANEQVR). The interval 45–88 (AKACTPRLHDCSHDRHSCCRGELFKDVCYCFYPEGEDKTEVCSC) is knottin domain. 4 cysteine pairs are disulfide-bonded: Cys-48–Cys-63, Cys-55–Cys-72, Cys-62–Cys-88, and Cys-74–Cys-86. The tract at residues 89–108 (QQPKSHKYIEKVVDKAKTVV) is linear cationic cytotoxin domain.

Belongs to the neurotoxin 19 (CSTX) family. 05 (U4-Lctx) subfamily. As to expression, expressed by the venom gland.

It localises to the secreted. In terms of biological role, enhances the high-affinity desensitization of human P2RX3 purinoceptors. The protein is U4-lycotoxin-Ls1a of Lycosa singoriensis (Wolf spider).